Reading from the N-terminus, the 388-residue chain is tRNA (guanine(26)-N(2))-dimethyltransferase (388 aa).

Residues 4–383 (KTIVEGTTKV…APITEIKEII (380 aa)) form the Trm1 methyltransferase domain. The S-adenosyl-L-methionine site is built by arginine 41, arginine 78, aspartate 94, and alanine 123. Residues cysteine 251, cysteine 254, cysteine 271, and cysteine 274 each coordinate Zn(2+).

It belongs to the class I-like SAM-binding methyltransferase superfamily. Trm1 family.

It catalyses the reaction guanosine(26) in tRNA + 2 S-adenosyl-L-methionine = N(2)-dimethylguanosine(26) in tRNA + 2 S-adenosyl-L-homocysteine + 2 H(+). In terms of biological role, dimethylates a single guanine residue at position 26 of a number of tRNAs using S-adenosyl-L-methionine as donor of the methyl groups. The sequence is that of tRNA (guanine(26)-N(2))-dimethyltransferase from Methanosarcina barkeri (strain Fusaro / DSM 804).